Here is a 151-residue protein sequence, read N- to C-terminus: Macrodomain Ter protein (151 aa).

Belongs to the MatP family. In terms of assembly, homodimer.

It localises to the cytoplasm. Required for spatial organization of the terminus region of the chromosome (Ter macrodomain) during the cell cycle. Prevents early segregation of duplicated Ter macrodomains during cell division. Binds specifically to matS, which is a 13 bp signature motif repeated within the Ter macrodomain. The sequence is that of Macrodomain Ter protein from Yersinia enterocolitica serotype O:8 / biotype 1B (strain NCTC 13174 / 8081).